Reading from the N-terminus, the 243-residue chain is Phosphoadenosine 5'-phosphosulfate reductase (243 aa).

Catalysis depends on cysteine 239, which acts as the Nucleophile; cysteine thiosulfonate intermediate.

It belongs to the PAPS reductase family. CysH subfamily.

It is found in the cytoplasm. The catalysed reaction is [thioredoxin]-disulfide + sulfite + adenosine 3',5'-bisphosphate + 2 H(+) = [thioredoxin]-dithiol + 3'-phosphoadenylyl sulfate. The protein operates within sulfur metabolism; hydrogen sulfide biosynthesis; sulfite from sulfate: step 3/3. Functionally, catalyzes the formation of sulfite from phosphoadenosine 5'-phosphosulfate (PAPS) using thioredoxin as an electron donor. This Erwinia tasmaniensis (strain DSM 17950 / CFBP 7177 / CIP 109463 / NCPPB 4357 / Et1/99) protein is Phosphoadenosine 5'-phosphosulfate reductase.